We begin with the raw amino-acid sequence, 657 residues long: Matrix metalloproteinase-15 (657 aa).

An N-terminal signal peptide occupies residues 1–36 (MGSDRSALGRPGCTGSCLSSRASLLPLLLVLLDCLG). A propeptide spanning residues 37–127 (HGTASKDAEV…KANLRRRRKR (91 aa)) is cleaved from the precursor. The Cysteine switch motif lies at 105 to 112 (PRCGVPDQ). C107 contacts Zn(2+). Over 128–614 (YTLTGKAWNN…MEEVVRTVNV (487 aa)) the chain is Extracellular. N146 is a glycosylation site (N-linked (GlcNAc...) asparagine). H255 contacts Zn(2+). Residue E256 is part of the active site. Residues H259 and H265 each contribute to the Zn(2+) site. Positions 295–365 (IQQLYGSPDG…ERPDQYGPNI (71 aa)) are disordered. Pro residues predominate over residues 328 to 337 (PRPPQPPHPG). 4 Hemopexin repeats span residues 363 to 411 (PNIC…WRGL), 412 to 457 (PGNI…GTDI), 459 to 507 (YDRI…QGIP), and 508 to 555 (TSPK…FMGC). A disulfide bond links C366 and C555. Residue N414 is glycosylated (N-linked (GlcNAc...) asparagine). Residues 561-599 (PRSRWPDVARPPFNPNGGAEPEADGDSKEENAGDKDEGS) form a disordered region. Residues 585–599 (GDSKEENAGDKDEGS) are compositionally biased toward basic and acidic residues. Residues 615 to 635 (VMVLVPLLLLLCILGLAFALV) traverse the membrane as a helical segment. Over 636-657 (QMQRKGAPRMLLYCKRSLQEWV) the chain is Cytoplasmic.

Belongs to the peptidase M10A family. The cofactor is Zn(2+). Ca(2+) is required as a cofactor. The precursor is cleaved by a furin endopeptidase.

Its subcellular location is the membrane. In terms of biological role, endopeptidase that degrades various components of the extracellular matrix. May activate progelatinase A. This is Matrix metalloproteinase-15 (Mmp15) from Mus musculus (Mouse).